We begin with the raw amino-acid sequence, 188 residues long: dCTP deaminase (188 aa).

DCTP-binding positions include 111-116, 135-137, Gln-156, Tyr-170, and Gln-180; these read KSTYAR and TLE. Glu-137 functions as the Proton donor/acceptor in the catalytic mechanism.

The protein belongs to the dCTP deaminase family. Homotrimer.

The enzyme catalyses dCTP + H2O + H(+) = dUTP + NH4(+). It functions in the pathway pyrimidine metabolism; dUMP biosynthesis; dUMP from dCTP (dUTP route): step 1/2. Its function is as follows. Catalyzes the deamination of dCTP to dUTP. The protein is dCTP deaminase of Neisseria meningitidis serogroup B (strain ATCC BAA-335 / MC58).